The following is a 57-amino-acid chain: Large ribosomal subunit protein bL33 (57 aa).

The protein belongs to the bacterial ribosomal protein bL33 family.

The sequence is that of Large ribosomal subunit protein bL33 from Shewanella pealeana (strain ATCC 700345 / ANG-SQ1).